The primary structure comprises 265 residues: Apolipoprotein A-I (265 aa).

The N-terminal stretch at 1 to 18 (MKAVVLAVAALFLAGGEA) is a signal peptide. 2 consecutive repeat copies span residues 68–89 (LKLT…EQLG) and 90–111 (PVTQ…QEMN). Residues 68 to 265 (LKLTENLDTL…EEASKKLSSQ (198 aa)) form a 10 X approximate tandem repeats region. A Methionine sulfoxide modification is found at Met110. One copy of the 3; half-length repeat lies at 112 to 122 (KDLADMKQKVQ). Tandem repeats lie at residues 123–144 (PYME…QKVE), 145–166 (PLST…EKLA), and 167–188 (PLGA…TQLA). The 7; truncated repeat unit spans residues 189 to 208 (PYSEQMRERLAERLAALRDS). Position 194 is a methionine sulfoxide (Met194). Residues 209 to 230 (PSLAEYQAKAHEHLKTLHEKAQ) form repeat 8. The 9; half-length repeat unit spans residues 231–241 (PALSDLGQGVL). Repeat 10 spans residues 242–265 (PVLESLKATLVGAIEEASKKLSSQ).

The protein belongs to the apolipoprotein A1/A4/E family. In terms of assembly, homodimer. Interacts with APOA1BP and CLU. Component of a sperm activating protein complex (SPAP), consisting of APOA1, an immunoglobulin heavy chain, an immunoglobulin light chain and albumin. Interacts with NDRG1. Interacts with SCGB3A2. Interacts with NAXE and YJEFN3. Post-translationally, glycosylated. In terms of processing, palmitoylated. Phosphorylation sites are present in the extracellular medium.

Its subcellular location is the secreted. Participates in the reverse transport of cholesterol from tissues to the liver for excretion by promoting cholesterol efflux from tissues and by acting as a cofactor for the lecithin cholesterol acyltransferase (LCAT). As part of the SPAP complex, activates spermatozoa motility. This chain is Apolipoprotein A-I (Apoa1), found in Dipodomys ordii (Ord's kangaroo rat).